The chain runs to 157 residues: Root allergen protein (157 aa).

The protein belongs to the BetVI family.

In Taraxacum officinale (Common dandelion), this protein is Root allergen protein.